The following is a 233-amino-acid chain: tRNA (guanine-N(1)-)-methyltransferase (233 aa).

S-adenosyl-L-methionine contacts are provided by residues Gly113 and 133 to 138; that span reads IGDYVL.

This sequence belongs to the RNA methyltransferase TrmD family. In terms of assembly, homodimer.

The protein localises to the cytoplasm. The enzyme catalyses guanosine(37) in tRNA + S-adenosyl-L-methionine = N(1)-methylguanosine(37) in tRNA + S-adenosyl-L-homocysteine + H(+). Functionally, specifically methylates guanosine-37 in various tRNAs. The sequence is that of tRNA (guanine-N(1)-)-methyltransferase from Ruminiclostridium cellulolyticum (strain ATCC 35319 / DSM 5812 / JCM 6584 / H10) (Clostridium cellulolyticum).